Consider the following 83-residue polypeptide: Kappa-ctenitoxin-Pn1a (83 aa).

The N-terminal stretch at 1-21 is a signal peptide; the sequence is MWFKIQVLVLAITLITLGIQA. Positions 22-37 are excised as a propeptide; it reads EPNSSPNNPLIVEEDR. Intrachain disulfides connect Cys40-Cys55, Cys47-Cys60, Cys54-Cys71, and Cys62-Cys69. A propeptide spanning residues 78-83 is cleaved from the precursor; the sequence is LFGFGK.

The protein belongs to the neurotoxin 02 (plectoxin) family. In terms of tissue distribution, expressed by the venom gland.

It localises to the secreted. In terms of biological role, antagonist of L-type calcium channels (Cav1/CACNA1). In GH3 neuroendocrinal cell line, it reversibly inhibits the A-type potassium current but does not block other potassium currents or calcium channels. Shows an important acetylcholine-mediated antiarrhythmogenic effect in isolated hearts. In vivo, causes paralysis in the posterior limbs and gradual decreases in movement and aggression during 24 hours at dose levels of 5 ug per mouse. The sequence is that of Kappa-ctenitoxin-Pn1a from Phoneutria nigriventer (Brazilian armed spider).